A 152-amino-acid chain; its full sequence is UPF0756 membrane protein Daud_1310 (152 aa).

4 consecutive transmembrane segments (helical) span residues 14–34 (LVGV…LLFI), 51–71 (LELG…NGKI), 76–96 (IIYN…ALAT), and 112–132 (IIFG…GMPV).

This sequence belongs to the UPF0756 family.

Its subcellular location is the cell membrane. This is UPF0756 membrane protein Daud_1310 from Desulforudis audaxviator (strain MP104C).